Reading from the N-terminus, the 269-residue chain is Putative pyridoxine kinase (269 aa).

Residue N139 participates in ATP binding. E142 contributes to the Mg(2+) binding site. Residues 176-180 (KGGGR), D189, V205, G214, and K239 contribute to the ATP site.

The protein belongs to the ThiD family.

The enzyme catalyses pyridoxal + ATP = pyridoxal 5'-phosphate + ADP + H(+). Phosphorylates B6 vitamers; functions in a salvage pathway. Uses pyridoxal, pyridoxine, and pyridoxamine as substrates. The polypeptide is Putative pyridoxine kinase (pdxK) (Treponema pallidum (strain Nichols)).